The sequence spans 256 residues: Trypsin alpha (256 aa).

The signal sequence occupies residues 1–22 (MLKIVILLSAVVCALGGTVPEG). Residues 23 to 30 (LLPQLDGR) constitute a propeptide, activation peptide. A Peptidase S1 domain is found at 31–254 (IVGGSATTIS…LRSWVISTAN (224 aa)). Cysteine 56 and cysteine 72 form a disulfide bridge. Catalysis depends on charge relay system residues histidine 71 and aspartate 116. Intrachain disulfides connect cysteine 180–cysteine 197 and cysteine 206–cysteine 230. Serine 210 (charge relay system) is an active-site residue.

This sequence belongs to the peptidase S1 family.

It is found in the secreted. It localises to the extracellular space. It carries out the reaction Preferential cleavage: Arg-|-Xaa, Lys-|-Xaa.. The polypeptide is Trypsin alpha (alphaTry) (Drosophila erecta (Fruit fly)).